Consider the following 115-residue polypeptide: MGSLKLVCAVLLCMMVAAPVARASLTCPQIKGNLTPCVLYLKNGGVLPPSCCKGVRAVNDASRTTSDRQSACNCLKDTAKGIAGLNPNLAAGLPGKCGVNIPYKISPSTNCNNVK.

An N-terminal signal peptide occupies residues 1–23 (MGSLKLVCAVLLCMMVAAPVARA). Disulfide bonds link Cys27/Cys74, Cys37/Cys51, Cys52/Cys97, and Cys72/Cys111.

The protein belongs to the plant LTP family. As to quaternary structure, monomer. As to expression, expressed in seed (at protein level). Expressed in seed.

Plant non-specific lipid-transfer proteins transfer phospholipids as well as galactolipids across membranes. May play a role in wax or cutin deposition in the cell walls of expanding epidermal cells and certain secretory tissues. The sequence is that of Non-specific lipid-transfer protein Cor a 8.0101 from Corylus avellana (European hazel).